Here is an 89-residue protein sequence, read N- to C-terminus: MSITAERTQELVKEYATKEGDTGSAEVQVAILSERIRNLTEHLKSHKKDFHSRRGLLIMVGQRRRMLDYLKAKDNKRYEGLIGRLGLRK.

Belongs to the universal ribosomal protein uS15 family. As to quaternary structure, part of the 30S ribosomal subunit. Forms a bridge to the 50S subunit in the 70S ribosome, contacting the 23S rRNA.

Functionally, one of the primary rRNA binding proteins, it binds directly to 16S rRNA where it helps nucleate assembly of the platform of the 30S subunit by binding and bridging several RNA helices of the 16S rRNA. Forms an intersubunit bridge (bridge B4) with the 23S rRNA of the 50S subunit in the ribosome. In Paramagnetospirillum magneticum (strain ATCC 700264 / AMB-1) (Magnetospirillum magneticum), this protein is Small ribosomal subunit protein uS15.